Reading from the N-terminus, the 452-residue chain is MNFSAVILAAGKGTRMYSNKPKVLHTLAGKPMAKHVIDTCEGLGAQNIHLVYGHGGDQMKAELGEERVQWVLQAEQLGTGHAVNQAAPEFADDEKVLVLYGDVPLISAETVENLLDAQPTGGIALLTVVLDNPMGYGRIIRRNGPVIAIVEQKDATEEQKLIKEINTGVMVATGGDLKRWLAALKNENAQGEYYLTDIIAAAHDEGRAVEAVHPVSPIEVEGVNDRAQLARLERAYQAAQAQKLLEQGVMLRDPSRFDLRGTLQCGMDIEIDANVIIEGNVTLGDNVIIGAGCVLKDCEIDDNTVIRPYSVIEGATVGEECTVGPFTRLRPGAELCNDAHVGNFVEVKNVRLGEGSKANHLTYLGDAEIGKRVNVGAGVITCNYDGANKFKTIIGDDVFVGSDSQLIAPVTVANGATVGAGSTVTKDVNENELYISRAKERRIANWQRPTKK.

Residues 1 to 226 (MNFSAVILAA…PIEVEGVNDR (226 aa)) form a pyrophosphorylase region. UDP-N-acetyl-alpha-D-glucosamine-binding positions include 8 to 11 (LAAG), Lys-22, Gln-73, 78 to 79 (GT), 100 to 102 (YGD), Gly-137, Glu-151, Asn-166, and Asn-224. Position 102 (Asp-102) interacts with Mg(2+). Asn-224 serves as a coordination point for Mg(2+). Residues 227-247 (AQLARLERAYQAAQAQKLLEQ) form a linker region. An N-acetyltransferase region spans residues 248–452 (GVMLRDPSRF…IANWQRPTKK (205 aa)). Residues Arg-330 and Lys-348 each contribute to the UDP-N-acetyl-alpha-D-glucosamine site. Catalysis depends on His-360, which acts as the Proton acceptor. UDP-N-acetyl-alpha-D-glucosamine is bound by residues Tyr-363 and Asn-374. Acetyl-CoA is bound by residues Ala-377, 383 to 384 (NY), Ser-402, Ala-420, and Arg-437.

In the N-terminal section; belongs to the N-acetylglucosamine-1-phosphate uridyltransferase family. It in the C-terminal section; belongs to the transferase hexapeptide repeat family. Homotrimer. Requires Mg(2+) as cofactor.

The protein resides in the cytoplasm. The catalysed reaction is alpha-D-glucosamine 1-phosphate + acetyl-CoA = N-acetyl-alpha-D-glucosamine 1-phosphate + CoA + H(+). It catalyses the reaction N-acetyl-alpha-D-glucosamine 1-phosphate + UTP + H(+) = UDP-N-acetyl-alpha-D-glucosamine + diphosphate. The protein operates within nucleotide-sugar biosynthesis; UDP-N-acetyl-alpha-D-glucosamine biosynthesis; N-acetyl-alpha-D-glucosamine 1-phosphate from alpha-D-glucosamine 6-phosphate (route II): step 2/2. Its pathway is nucleotide-sugar biosynthesis; UDP-N-acetyl-alpha-D-glucosamine biosynthesis; UDP-N-acetyl-alpha-D-glucosamine from N-acetyl-alpha-D-glucosamine 1-phosphate: step 1/1. It participates in bacterial outer membrane biogenesis; LPS lipid A biosynthesis. Catalyzes the last two sequential reactions in the de novo biosynthetic pathway for UDP-N-acetylglucosamine (UDP-GlcNAc). The C-terminal domain catalyzes the transfer of acetyl group from acetyl coenzyme A to glucosamine-1-phosphate (GlcN-1-P) to produce N-acetylglucosamine-1-phosphate (GlcNAc-1-P), which is converted into UDP-GlcNAc by the transfer of uridine 5-monophosphate (from uridine 5-triphosphate), a reaction catalyzed by the N-terminal domain. The polypeptide is Bifunctional protein GlmU (Aliivibrio fischeri (strain ATCC 700601 / ES114) (Vibrio fischeri)).